Consider the following 81-residue polypeptide: Sec-independent protein translocase protein TatA (81 aa).

Residues 1–21 (MGGISVWQLLIIAVIVVLLFG) form a helical membrane-spanning segment. A disordered region spans residues 42 to 81 (AMSDEDSAKNEKDADFEPKSLEKQQQKEAAPETKKDKEQA).

Belongs to the TatA/E family. As to quaternary structure, the Tat system comprises two distinct complexes: a TatABC complex, containing multiple copies of TatA, TatB and TatC subunits, and a separate TatA complex, containing only TatA subunits. Substrates initially bind to the TatABC complex, which probably triggers association of the separate TatA complex to form the active translocon.

It is found in the cell inner membrane. Functionally, part of the twin-arginine translocation (Tat) system that transports large folded proteins containing a characteristic twin-arginine motif in their signal peptide across membranes. TatA could form the protein-conducting channel of the Tat system. This chain is Sec-independent protein translocase protein TatA, found in Vibrio parahaemolyticus serotype O3:K6 (strain RIMD 2210633).